The sequence spans 128 residues: Myelin basic protein (128 aa).

Disordered stretches follow at residues 1 to 24 (AGGA…EPAT) and 82 to 128 (TDGQ…PARR). 2 stretches are compositionally biased toward basic and acidic residues: residues 11-23 (GSRK…KEPA) and 96-107 (KSREAYRGRKDG).

The protein belongs to the myelin basic protein family. The N-terminus is blocked.

It is found in the myelin membrane. In terms of biological role, this protein may function to maintain proper structure of myelin. This chain is Myelin basic protein (MBP), found in Carcharhinus obscurus (Dusky shark).